Reading from the N-terminus, the 725-residue chain is Dolichyl-phosphate-mannose--protein mannosyltransferase 5 (725 aa).

Transmembrane regions (helical) follow at residues 34–54, 117–137, 145–165, 192–212, 219–239, and 256–276; these read QFAV…LYIP, YLWL…LTFF, SVIS…VTVS, IPFT…LGLN, GLFT…EILG, and VVAF…IHFE. MIR domains follow at residues 303–356, 368–427, and 439–495; these read PLQV…IETK, QREV…IRML, and LIKL…VESS. Asn409 carries N-linked (GlcNAc...) asparagine glycosylation. 4 helical membrane-spanning segments follow: residues 570 to 590, 619 to 639, 644 to 664, and 673 to 693; these read IYYL…LIAI, FYNN…PYCL, LYLH…SQYL, and IIGG…FYEF.

Belongs to the glycosyltransferase 39 family.

Its subcellular location is the endoplasmic reticulum membrane. It carries out the reaction a di-trans,poly-cis-dolichyl beta-D-mannosyl phosphate + L-seryl-[protein] = 3-O-(alpha-D-mannosyl)-L-seryl-[protein] + a di-trans,poly-cis-dolichyl phosphate + H(+). It catalyses the reaction a di-trans,poly-cis-dolichyl beta-D-mannosyl phosphate + L-threonyl-[protein] = 3-O-(alpha-D-mannosyl)-L-threonyl-[protein] + a di-trans,poly-cis-dolichyl phosphate + H(+). Its pathway is protein modification; protein glycosylation. Functionally, protein mannosyltransferase (PMT) involved in hyphal morphogenesis and drug sensitivity. Transfers mannose from Dol-P-mannose to Ser or Thr residues on proteins. PMT1, PMT2 and PMT4 account for most of the protein-O-glycosylation activity, while PMT5 and PMT6 may specifically modulate a much narrower spectrum of target proteins. Required for biofilm formation. This chain is Dolichyl-phosphate-mannose--protein mannosyltransferase 5, found in Candida albicans (strain SC5314 / ATCC MYA-2876) (Yeast).